The chain runs to 2130 residues: Highly reducing polyketide synthase anuA (2130 aa).

The 213-residue stretch at 1 to 213 folds into the Ketosynthase family 3 (KS3) domain; sequence MKAGVLSGTS…GANCHVILEQ (213 aa). The region spanning 317-644 is the Malonyl-CoA:ACP transacylase (MAT) domain; that stretch reads FVFTGQGSQW…SFAGNLWLKG (328 aa). Residues 701 to 836 form an N-terminal hotdog fold region; the sequence is HELLGSLLTG…GSIAIHPRNA (136 aa). The PKS/mFAS DH domain occupies 701–1000; that stretch reads HELLGSLLTG…LSPYQSTSQA (300 aa). Residue H733 is the Proton acceptor; for dehydratase activity of the active site. Residues 849-1000 are C-terminal hotdog fold; that stretch reads LESTAKRTWY…LSPYQSTSQA (152 aa). D914 functions as the Proton donor; for dehydratase activity in the catalytic mechanism. Residues 1405 to 1722 form the Enoyl reductase (ER) domain; it reads GQLDTIYFQQ…SRSRIGKVAI (318 aa). The Ketoreductase (KR) domain maps to 1747–1927; it reads SYVMVGCLGG…AVAVGLGMIS (181 aa). The region spanning 2047–2125 is the Carrier domain; that stretch reads TLDEAVLDHI…SLRDLAMTSL (79 aa). O-(pantetheine 4'-phosphoryl)serine is present on S2084.

Pantetheine 4'-phosphate serves as cofactor.

It participates in secondary metabolite biosynthesis. Its function is as follows. Highly reducing polyketide synthase; part of the gene cluster that mediates the biosynthesis of annullatin D, an alkylated aromatic polyketide with a fused dihydrobenzofuran lactone ring system that exhibits potent agonistic activities toward the cannabinoid receptors. The annullatin backbone 2-hydroxymethyl-3-pentylphenol is assembled from one acetyl-CoA starter unit and 5 malonyl-CoA elongation units by cooperation of the highly reducing polyketide synthase anuA, the short-chain dehydrogenase anuB and the oxidoreductase anuC, before being hydroxylated at the C-5 alkyl chain by the cytochrome P450 monooxygenase anuE to form (8S)-annullatin E. The prenyltransferase anuH subsequently installs one isoprenyl group at the benzene ring to form (8S)-annullatin J. Enzymatic or nonenzymatic dihydro-benzofuran ring formation between the prenyl and the phenolic hydroxyl groups in (8S)-annullatin J results in two diastereomers (2S,9S)-annullatin H and compound 12. The intermediate (2S,9S)-annullatin H is then converted to (2S,9S)-annullatin D by the FAD-linked oxidoreductase anuG-catalyzed five-member lactone ring formation. The isomer 12 acts as a substrate for the short-chain dehydrogenase anuF and is oxidized to (2R)-annullatin F, which is subsequently acetylated by an acetyltransferase leading to (2R)-annullatin G formation. The remaining enzymes identified within the cluster, anuD, anuI and anuJ, seem not to be involved in annullatin biosynthesis. In Penicillium roqueforti (strain FM164), this protein is Highly reducing polyketide synthase anuA.